We begin with the raw amino-acid sequence, 325 residues long: Acetyl-coenzyme A carboxylase carboxyl transferase subunit alpha (325 aa).

A CoA carboxyltransferase C-terminal domain is found at 44–298; it reads QLEARADQLR…KAAIQDNLQA (255 aa).

It belongs to the AccA family. As to quaternary structure, acetyl-CoA carboxylase is a heterohexamer composed of biotin carboxyl carrier protein (AccB), biotin carboxylase (AccC) and two subunits each of ACCase subunit alpha (AccA) and ACCase subunit beta (AccD).

It is found in the cytoplasm. The enzyme catalyses N(6)-carboxybiotinyl-L-lysyl-[protein] + acetyl-CoA = N(6)-biotinyl-L-lysyl-[protein] + malonyl-CoA. It functions in the pathway lipid metabolism; malonyl-CoA biosynthesis; malonyl-CoA from acetyl-CoA: step 1/1. In terms of biological role, component of the acetyl coenzyme A carboxylase (ACC) complex. First, biotin carboxylase catalyzes the carboxylation of biotin on its carrier protein (BCCP) and then the CO(2) group is transferred by the carboxyltransferase to acetyl-CoA to form malonyl-CoA. This chain is Acetyl-coenzyme A carboxylase carboxyl transferase subunit alpha, found in Picosynechococcus sp. (strain ATCC 27264 / PCC 7002 / PR-6) (Agmenellum quadruplicatum).